A 209-amino-acid chain; its full sequence is Transcription antitermination protein NusB (209 aa).

Belongs to the NusB family.

Its function is as follows. Involved in transcription antitermination. Required for transcription of ribosomal RNA (rRNA) genes. Binds specifically to the boxA antiterminator sequence of the ribosomal RNA (rrn) operons. This Cyanothece sp. (strain PCC 7425 / ATCC 29141) protein is Transcription antitermination protein NusB.